A 590-amino-acid polypeptide reads, in one-letter code: PWWP domain-containing protein 2B (590 aa).

4 disordered regions span residues 52 to 110, 182 to 347, 360 to 398, and 426 to 467; these read APLP…PPLP, KSTL…EHEP, YLRD…PQGP, and DSLD…TVPP. The residue at position 84 (Ser84) is a Phosphoserine. The span at 99–110 shows a compositional bias: pro residues; the sequence is PEPPPPLVPPLP. Phosphoserine occurs at positions 186 and 206. Basic and acidic residues predominate over residues 208–217; sequence PDRELRKPEE. Phosphoserine is present on Ser250. Residues 296-305 are compositionally biased toward basic and acidic residues; the sequence is VLDRESRDRP. A compositionally biased stretch (low complexity) spans 376 to 385; it reads GLADLSSGSS. Position 447 is a phosphoserine (Ser447). Residues 490–550 enclose the PWWP domain; the sequence is VGDIVWGKIH…ISKLSPFSEF (61 aa).

As to quaternary structure, component of a MTA1-specific subcomplex of the NuRD complex composed of PWWP2B, MTA1 and HDAC1 but does not contain CHD4 and MBD3. Interacts with MTA1 and HDAC1. Interacts with MTA2, MTA3, HDAC2, RBBP4, RBBP7, BRCC3 and ZNF516. Does not interact with CHD4 and MBD3. Deubiquitinated by BRCC3; leading to its stabilization.

In terms of biological role, chromatin-binding protein that acts as an adapter between distinct nucleosome components (H3K36me3 or H2A.Z) and chromatin-modifying complexes, contributing to the regulation of the levels of histone acetylation at actively transcribed genes. Competes with CHD4 and MBD3 for interaction with MTA1 to form a NuRD subcomplex, preventing the formation of full NuRD complex (containing CHD4 and MBD3), leading to recruitment of HDACs to gene promoters resulting in turn in the deacetylation of nearby H3K27 and H2A.Z. Plays a role in facilitating transcriptional elongation through regulation of histone acetylation. Negatively regulates brown adipocyte thermogenesis by interacting with and stabilizing HDAC1 at the UCP1 gene promoter, thereby promoting histone deacetylation at the promoter leading to the repression of UCP1 expression. This chain is PWWP domain-containing protein 2B (PWWP2B), found in Homo sapiens (Human).